A 120-amino-acid chain; its full sequence is MPPKAGQTKKAKMEAANKGAKKTTKKWSKGQSREALQNAVMFDKETYDKLRSEVPKYKLITPSIISDRLKIAVSIAAAGLKQLCREKLIRLVSCSSKTRVYTRIVQAAPAEAAAAAPAAE.

The segment at 1–32 (MPPKAGQTKKAKMEAANKGAKKTTKKWSKGQS) is disordered. Over residues 19 to 28 (GAKKTTKKWS) the composition is skewed to basic residues.

The protein belongs to the eukaryotic ribosomal protein eS25 family.

This Leishmania infantum protein is Small ribosomal subunit protein eS25 (RPS25).